The sequence spans 152 residues: Xanthine-guanine phosphoribosyltransferase (152 aa).

5-phospho-alpha-D-ribose 1-diphosphate contacts are provided by residues 37-38 (RG), Arg69, and 88-96 (DDLVDTGGT). Residue Arg69 participates in GMP binding. Asp89 serves as a coordination point for Mg(2+). Guanine contacts are provided by Asp92 and Ile135. Positions 92 and 135 each coordinate xanthine. GMP contacts are provided by residues 92 to 96 (DTGGT) and 134 to 135 (WI).

This sequence belongs to the purine/pyrimidine phosphoribosyltransferase family. XGPT subfamily. As to quaternary structure, homotetramer. The cofactor is Mg(2+).

It localises to the cell inner membrane. The enzyme catalyses GMP + diphosphate = guanine + 5-phospho-alpha-D-ribose 1-diphosphate. The catalysed reaction is XMP + diphosphate = xanthine + 5-phospho-alpha-D-ribose 1-diphosphate. It carries out the reaction IMP + diphosphate = hypoxanthine + 5-phospho-alpha-D-ribose 1-diphosphate. Its pathway is purine metabolism; GMP biosynthesis via salvage pathway; GMP from guanine: step 1/1. It functions in the pathway purine metabolism; XMP biosynthesis via salvage pathway; XMP from xanthine: step 1/1. In terms of biological role, purine salvage pathway enzyme that catalyzes the transfer of the ribosyl-5-phosphate group from 5-phospho-alpha-D-ribose 1-diphosphate (PRPP) to the N9 position of the 6-oxopurines guanine and xanthine to form the corresponding ribonucleotides GMP (guanosine 5'-monophosphate) and XMP (xanthosine 5'-monophosphate), with the release of PPi. To a lesser extent, also acts on hypoxanthine. In Erwinia tasmaniensis (strain DSM 17950 / CFBP 7177 / CIP 109463 / NCPPB 4357 / Et1/99), this protein is Xanthine-guanine phosphoribosyltransferase.